We begin with the raw amino-acid sequence, 419 residues long: Enolase (419 aa).

Glutamine 161 serves as a coordination point for (2R)-2-phosphoglycerate. Residue glutamate 205 is the Proton donor of the active site. Residues aspartate 240, glutamate 283, and aspartate 309 each coordinate Mg(2+). (2R)-2-phosphoglycerate contacts are provided by lysine 334, arginine 363, serine 364, and lysine 385. The active-site Proton acceptor is lysine 334.

The protein belongs to the enolase family. Requires Mg(2+) as cofactor.

It localises to the cytoplasm. The protein resides in the secreted. The protein localises to the cell surface. It carries out the reaction (2R)-2-phosphoglycerate = phosphoenolpyruvate + H2O. The protein operates within carbohydrate degradation; glycolysis; pyruvate from D-glyceraldehyde 3-phosphate: step 4/5. Catalyzes the reversible conversion of 2-phosphoglycerate (2-PG) into phosphoenolpyruvate (PEP). It is essential for the degradation of carbohydrates via glycolysis. The polypeptide is Enolase (Saccharolobus islandicus (strain M.16.27) (Sulfolobus islandicus)).